Reading from the N-terminus, the 298-residue chain is Estradiol 17-beta-dehydrogenase 11 (298 aa).

An N-terminal signal peptide occupies residues 1–21 (MKYLLDLILLLPLLIVFCIES). 40–64 (LITGAGHGIGRLTAYEFAKLNTKLV) provides a ligand contact to NADP(+). Serine 172 contributes to the substrate binding site. The active-site Proton acceptor is tyrosine 185.

It belongs to the short-chain dehydrogenases/reductases (SDR) family. 17-beta-HSD 3 subfamily.

It localises to the endoplasmic reticulum. The protein resides in the lipid droplet. The enzyme catalyses 17beta-estradiol + NAD(+) = estrone + NADH + H(+). It catalyses the reaction 17beta-estradiol + NADP(+) = estrone + NADPH + H(+). Its function is as follows. Can convert androstan-3-alpha,17-beta-diol (3-alpha-diol) to androsterone in vitro, suggesting that it may participate in androgen metabolism during steroidogenesis. May act by metabolizing compounds that stimulate steroid synthesis and/or by generating metabolites that inhibit it. Has no activity toward DHEA (dehydroepiandrosterone), or A-dione (4-androste-3,17-dione), and only a slight activity toward testosterone to A-dione. The polypeptide is Estradiol 17-beta-dehydrogenase 11 (Hsd17b11) (Rattus norvegicus (Rat)).